The chain runs to 365 residues: Phospho-N-acetylmuramoyl-pentapeptide-transferase (365 aa).

10 helical membrane passes run 22-42, 74-94, 95-115, 133-153, 168-188, 201-221, 240-260, 267-287, 292-312, and 342-362; these read YISV…LALG, TMGG…WGDL, TSIY…IGFF, YKFA…FYLL, SLYI…IING, GLAI…AYIE, LAEV…FLWF, VFMG…IAVM, LIFF…MLQV, and KVVI…LAAI.

It belongs to the glycosyltransferase 4 family. MraY subfamily. Mg(2+) serves as cofactor.

It is found in the cell inner membrane. It catalyses the reaction UDP-N-acetyl-alpha-D-muramoyl-L-alanyl-gamma-D-glutamyl-meso-2,6-diaminopimeloyl-D-alanyl-D-alanine + di-trans,octa-cis-undecaprenyl phosphate = di-trans,octa-cis-undecaprenyl diphospho-N-acetyl-alpha-D-muramoyl-L-alanyl-D-glutamyl-meso-2,6-diaminopimeloyl-D-alanyl-D-alanine + UMP. It participates in cell wall biogenesis; peptidoglycan biosynthesis. In terms of biological role, catalyzes the initial step of the lipid cycle reactions in the biosynthesis of the cell wall peptidoglycan: transfers peptidoglycan precursor phospho-MurNAc-pentapeptide from UDP-MurNAc-pentapeptide onto the lipid carrier undecaprenyl phosphate, yielding undecaprenyl-pyrophosphoryl-MurNAc-pentapeptide, known as lipid I. The chain is Phospho-N-acetylmuramoyl-pentapeptide-transferase from Francisella tularensis subsp. tularensis (strain FSC 198).